The chain runs to 294 residues: Non-selective voltage-gated ion channel VDAC2 (294 aa).

Residue Ala2 is modified to N-acetylalanine. ATP is bound by residues Lys23 and Lys31. Residue Lys31 is modified to N6-acetyllysine; alternate. Lys31 bears the N6-succinyllysine; alternate mark. A Glycyl lysine isopeptide (Lys-Gly) (interchain with G-Cter in ubiquitin); alternate cross-link involves residue Lys31. 2 beta stranded membrane-spanning segments follow: residues 37 to 46 (LVKLDVKTKS) and 50 to 58 (VEFSTSGSS). Residue Lys64 forms a Glycyl lysine isopeptide (Lys-Gly) (interchain with G-Cter in ubiquitin) linkage. The chain crosses the membrane as a beta stranded span at residues 65–75 (VTGTLETKYKW). Residue Tyr78 is modified to Phosphotyrosine. 3 beta stranded membrane passes run 80–87 (LTFTEKWN), 91–100 (TLGTEIAIED), and 106–115 (LKLTFDTTFS). Position 118 is a phosphothreonine (Thr118). Lys120 carries the N6-acetyllysine; alternate modification. Residue Lys120 forms a Glycyl lysine isopeptide (Lys-Gly) (interchain with G-Cter in ubiquitin); alternate linkage. A Glycyl lysine isopeptide (Lys-Gly) (interchain with G-Cter in ubiquitin) cross-link involves residue Lys121. The next 4 beta stranded transmembrane spans lie at 122–131 (SGKIKSSYKR), 134–141 (VNLGCDVD), 148–156 (AIHGSAVFG), and 161–169 (LAGYQMTFD). Lys172 participates in a covalent cross-link: Glycyl lysine isopeptide (Lys-Gly) (interchain with G-Cter in ubiquitin). 6 beta stranded membrane-spanning segments follow: residues 174–186 (KLTR…GYRT), 189–196 (FQLHTNVN), 200–209 (EFGGSIYQKV), 213–222 (LDTSVNLAWT), 229–238 (RFGIAAKYQL), and 242–249 (ASISAKVN). Ser251 is subject to Phosphoserine. Residues 253–255 (LIG) and 271–275 (SALVD) each bind NAD(+). A run of 2 beta stranded transmembrane segments spans residues 253–262 (LIGVGYTQTL) and 265–274 (GVKLTLSALV). The residue at position 277 (Lys277) is an N6-acetyllysine; alternate. A Glycyl lysine isopeptide (Lys-Gly) (interchain with G-Cter in ubiquitin); alternate cross-link involves residue Lys277. The chain crosses the membrane as a beta stranded span at residues 284-293 (HKLGLALELE).

It belongs to the eukaryotic mitochondrial porin family. As to quaternary structure, monomer, homodimer and higher order oligomers; formation of higher order structures is necessary for scramblase activity. Interacts with ARMC12 in a TBC1D21-dependent manner. Interacts with KLC3. Interacts with SPATA33. Interacts with PPP3CC in a SPATA33-dependent manner. Ubiquitinated by PRKN during mitophagy, leading to its degradation and enhancement of mitophagy. Deubiquitinated by USP30.

The protein resides in the mitochondrion outer membrane. It is found in the membrane. The enzyme catalyses chloride(in) = chloride(out). It carries out the reaction K(+)(in) = K(+)(out). It catalyses the reaction a 1,2-diacyl-sn-glycero-3-phospho-L-serine(in) = a 1,2-diacyl-sn-glycero-3-phospho-L-serine(out). The catalysed reaction is a 1,2-diacyl-sn-glycero-3-phosphocholine(in) = a 1,2-diacyl-sn-glycero-3-phosphocholine(out). The enzyme catalyses a 1,2-diacyl-sn-glycero-3-phospho-(1D-myo-inositol)(in) = a 1,2-diacyl-sn-glycero-3-phospho-(1D-myo-inositol)(out). Functionally, non-selective voltage-gated ion channel that mediates the transport of anions and cations through the mitochondrion outer membrane and plasma membrane. The channel adopts an open conformation at zero mV and a closed conformation at both positive and negative potentials. There are two populations of channels; the main that functions in a lower open-state conductance with lower ion selectivity, that switch, in a voltage-dependent manner, from the open to a low-conducting 'closed' state and the other that has a normal ion selectivity in the typical high conductance, 'open' state. Binds various lipids, including the sphingolipid ceramide, the phospholipid phosphatidylcholine, and the sterols cholesterol and oxysterol. Binding of ceramide promotes the mitochondrial outer membrane permeabilization (MOMP) apoptotic pathway. In terms of biological role, catalyzes the scrambling of phospholipids across the outer mitochondrial membrane; the mechanism is unrelated to channel activity and is capable of translocating both anionic and zwitterionic phospholipids. The polypeptide is Non-selective voltage-gated ion channel VDAC2 (Sus scrofa (Pig)).